A 467-amino-acid chain; its full sequence is Probable glycerol-3-phosphate dehydrogenase [NAD(+)] 2, cytosolic (467 aa).

Residues 47 to 52 (GAGAWG), Lys195, and Ala234 each bind NAD(+). A substrate-binding site is contributed by Lys195. The Proton acceptor role is filled by Lys284. Residues Arg346 and Gln374 each coordinate NAD(+). Substrate is bound at residue 346 to 347 (RN).

It belongs to the NAD-dependent glycerol-3-phosphate dehydrogenase family.

Its subcellular location is the cytoplasm. The protein resides in the cytosol. It catalyses the reaction sn-glycerol 3-phosphate + NAD(+) = dihydroxyacetone phosphate + NADH + H(+). Functionally, may be involved in cell redox homeostasis. The chain is Probable glycerol-3-phosphate dehydrogenase [NAD(+)] 2, cytosolic from Oryza sativa subsp. japonica (Rice).